Here is a 398-residue protein sequence, read N- to C-terminus: Acetate kinase (398 aa).

Residue asparagine 7 coordinates Mg(2+). Lysine 14 serves as a coordination point for ATP. Arginine 91 is a substrate binding site. Aspartate 148 serves as the catalytic Proton donor/acceptor. ATP-binding positions include 208 to 212 (HIGNG), 283 to 285 (DMR), and 331 to 335 (GVGEN). Glutamate 384 contacts Mg(2+).

It belongs to the acetokinase family. In terms of assembly, homodimer. It depends on Mg(2+) as a cofactor. Mn(2+) is required as a cofactor.

Its subcellular location is the cytoplasm. The enzyme catalyses acetate + ATP = acetyl phosphate + ADP. The protein operates within metabolic intermediate biosynthesis; acetyl-CoA biosynthesis; acetyl-CoA from acetate: step 1/2. Catalyzes the formation of acetyl phosphate from acetate and ATP. Can also catalyze the reverse reaction. This is Acetate kinase from Phocaeicola vulgatus (strain ATCC 8482 / DSM 1447 / JCM 5826 / CCUG 4940 / NBRC 14291 / NCTC 11154) (Bacteroides vulgatus).